We begin with the raw amino-acid sequence, 398 residues long: Phosphoglycerate kinase (398 aa).

Residues 21-23 (DFN), R36, 59-62 (HLGR), R119, and R157 contribute to the substrate site. ATP contacts are provided by residues K208, G296, E327, and 354 to 357 (GGDS).

It belongs to the phosphoglycerate kinase family. Monomer.

The protein localises to the cytoplasm. The enzyme catalyses (2R)-3-phosphoglycerate + ATP = (2R)-3-phospho-glyceroyl phosphate + ADP. It functions in the pathway carbohydrate degradation; glycolysis; pyruvate from D-glyceraldehyde 3-phosphate: step 2/5. This Streptococcus pyogenes serotype M18 (strain MGAS8232) protein is Phosphoglycerate kinase.